The primary structure comprises 291 residues: 3-methylcatechol 2,3-dioxygenase (291 aa).

2 VOC domains span residues 5–119 (RLGY…IYYG) and 143–264 (GLGH…YGWG). Residues His-146, His-210, and Glu-260 each coordinate Fe cation.

This sequence belongs to the extradiol ring-cleavage dioxygenase family. As to quaternary structure, homooctamer. Requires Fe(2+) as cofactor.

The catalysed reaction is 3-methylcatechol + O2 = 2-hydroxy-6-oxo-2,4-heptadienoate + H(+). It functions in the pathway xenobiotic degradation; toluene degradation. This Pseudomonas putida (strain ATCC 700007 / DSM 6899 / JCM 31910 / BCRC 17059 / LMG 24140 / F1) protein is 3-methylcatechol 2,3-dioxygenase (todE).